Consider the following 142-residue polypeptide: MVLSPADKTNVKSTWDKLGGHAGEYGGEALERTFASFPTTKTYFPHFDLSPGSAQVKAHGKKVADALTLAVGHLDDLPGALSALSDLHAHKLRVDPVNFKLLSHCLLVTLACHHPAEFTPAVHASLDKFFSAVSTVLTSKYR.

In terms of domain architecture, Globin spans Val2–Arg142. Position 4 is a phosphoserine (Ser4). Lys8 carries the post-translational modification N6-succinyllysine. Phosphothreonine is present on Thr9. Lys12 is subject to N6-succinyllysine. At Lys17 the chain carries N6-acetyllysine; alternate. Position 17 is an N6-succinyllysine; alternate (Lys17). A Phosphotyrosine modification is found at Tyr25. Ser36 is subject to Phosphoserine. Residue Lys41 is modified to N6-succinyllysine. Phosphoserine is present on Ser50. His59 contacts O2. His88 lines the heme b pocket. Phosphoserine is present on Ser103. The residue at position 109 (Thr109) is a Phosphothreonine. A Phosphoserine modification is found at Ser125. Phosphothreonine is present on residues Thr135 and Thr138. A Phosphoserine modification is found at Ser139.

It belongs to the globin family. In terms of assembly, heterotetramer of two alpha chains and two beta chains. In terms of tissue distribution, red blood cells.

Its function is as follows. Involved in oxygen transport from the lung to the various peripheral tissues. Functionally, hemopressin acts as an antagonist peptide of the cannabinoid receptor CNR1. Hemopressin-binding efficiently blocks cannabinoid receptor CNR1 and subsequent signaling. The sequence is that of Hemoglobin subunit alpha (HBA) from Ailurus fulgens (Himalayan red panda).